The sequence spans 863 residues: MEGEGGGSGGAGTSGDSGDGGEQLLTVKHELRTANLTGHAEKVGIENFELLKVLGTGAYGKVFLVRKISGHDAGKLYAMKVLKKATIVQKAKTTEHTRTERQVLEHIRQSPFLVTLHYAFQTETKLHLILDYINGGELFTHLSQRERFTEHEVQIYVGEIVLALEHLHKLGIIYRDIKLENILLDSNGHVVLTDFGLSKEFVADETERAYSFCGTIEYMAPDIVRGGDSGHDKAVDWWSLGVLMYELLTGASPFTVDGEKNSQAEISRRILKSEPPYPQEMSTVAKDLLQRLLMKDPKKRLGCGPRDAEEIKEHLFFEKIKWDDLAAKKVPAPFKPVIRDELDVSNFAEEFTEMDPTYSPAALPQSSERLFQGYSFVAPSILFKRNAAVIDPLQFHMGVDRPGVTNVARSAMMKDSPFYQHYDLDLKDKPLGEGSFSICRKCVHKKTNQAFAVKIISKRMEANTQKEITALKLCEGHPNIVKLHEVFHDQVAASAQPPGQVVLCSLLLLALLFNRSLTRKPVTWTWLVHSTSQLPPLPPPMPEIVLFILLSDNGQLHTFLVMELLNGGELFERIKRKKHFSETEASYIMRKLVSAVSHMHDVGVVHRDLKPENLLFTDENDNLEIKVIDFGFARLKPPDNQPLKTPCFTLHYAAPELLTHNGYDESCDLWSLGVILYTMLSGQVPFQSHDRSLTCTSAVEIMKKIKKGDFSFEGEAWKNVSQEAKDLIQGLLTVDPNKRLKMSGLRYNEWLQDGSQLSSNPLMTPDILGSSGAAVHTCVKATFHAFNKYKREGFCLQNVDKAPLAKRRKMKRTSTSTETRSSSSESSRSSSSQSHGKTTPTKTLQPSNPTEGSNPDTLFQFSD.

Over residues M1 to G21 the composition is skewed to gly residues. The disordered stretch occupies residues M1–E22. A Protein kinase 1 domain is found at F48–F317. Residues L54 to V62 and K80 each bind ATP. D176 functions as the Proton acceptor in the catalytic mechanism. A Phosphoserine; by autocatalysis modification is found at S211. In terms of domain architecture, AGC-kinase C-terminal spans E318–N386. The residue at position 359 (S359) is a Phosphoserine; by MAPK1, MAPK3 and MAPK14. A phosphoserine; by autocatalysis mark is found at S375 and S380. The 248-residue stretch at D428–I675 folds into the Protein kinase 2 domain. Residues L431–R440 and K454 contribute to the ATP site. D608 (proton acceptor) is an active-site residue. The residue at position 645 (T645) is a Phosphothreonine; by MAPK1, MAPK3 and MAPK14. Phosphoserine is present on residues S711, S721, S755, and S759. T764 bears the Phosphothreonine mark. A disordered region spans residues A805 to D863. Residues T813–S832 are compositionally biased toward low complexity. Residues S814, S816, and S822 each carry the phosphoserine; by autocatalysis modification. Polar residues predominate over residues Q833 to D863. At S862 the chain carries Phosphoserine.

This sequence belongs to the protein kinase superfamily. AGC Ser/Thr protein kinase family. S6 kinase subfamily. As to quaternary structure, forms a complex with either MAPK1/ERK2 or MAPK3/ERK1 in quiescent cells which transiently dissociates following mitogenic stimulation. Also associates with MAPK14/p38-alpha. Activated RPS6KA5 associates with and phosphorylates the NF-kappa-B p65 subunit RELA. Interacts with CREBBP and EP300. The cofactor is Mg(2+). Post-translationally, ser-375 and Thr-645 phosphorylation is required for kinase activity. Ser-375 and Ser-211 are autophosphorylated by the C-terminal kinase domain, and their phosphorylation is essential for the catalytic activity of the N-terminal kinase domain. Phosphorylated at Ser-359, Thr-645 and Thr-764 by MAPK1/ERK2, MAPK3/ERK1 and MAPK14/p38-alpha. Autophosphorylated at Ser-814, Ser-816 and Ser-822 by the N-terminal kinase domain. In terms of processing, ubiquitinated.

It localises to the nucleus. The enzyme catalyses L-seryl-[protein] + ATP = O-phospho-L-seryl-[protein] + ADP + H(+). It catalyses the reaction L-threonyl-[protein] + ATP = O-phospho-L-threonyl-[protein] + ADP + H(+). Activated by phosphorylation at Ser-359, Thr-645 and Thr-764 by MAPK1/ERK2, MAPK3/ERK1 and MAPK14/p38-alpha, and by further autophosphorylation of Ser-211, Ser-375 and Ser-380 by the activated C-terminal kinase domain. The active N-terminal kinase domain finally phosphorylates downstream substrates, as well as Ser-814, Ser-816 and Ser-822 in its own C-terminal region. Serine/threonine-protein kinase that is required for the mitogen or stress-induced phosphorylation of the transcription factors CREB1 and ATF1 and for the regulation of the transcription factors RELA, STAT3 and ETV1/ER81, and that contributes to gene activation by histone phosphorylation and functions in the regulation of inflammatory genes. Phosphorylates CREB1 and ATF1 in response to mitogenic or stress stimuli such as UV-C irradiation, epidermal growth factor (EGF) and anisomycin. Plays an essential role in the control of RELA transcriptional activity in response to TNF and upon glucocorticoid, associates in the cytoplasm with the glucocorticoid receptor NR3C1 and contributes to RELA inhibition and repression of inflammatory gene expression. In skeletal myoblasts is required for phosphorylation of RELA at 'Ser-276' during oxidative stress. In erythropoietin-stimulated cells, is necessary for the 'Ser-727' phosphorylation of STAT3 and regulation of its transcriptional potential. Phosphorylates ETV1/ER81 at 'Ser-191' and 'Ser-216', and thereby regulates its ability to stimulate transcription, which may be important during development and breast tumor formation. Directly represses transcription via phosphorylation of 'Ser-1' of histone H2A. Phosphorylates 'Ser-10' of histone H3 in response to mitogenics, stress stimuli and EGF, which results in the transcriptional activation of several immediate early genes, including proto-oncogenes c-fos/FOS and c-jun/JUN. May also phosphorylate 'Ser-28' of histone H3. Mediates the mitogen- and stress-induced phosphorylation of high mobility group protein 1 (HMGN1/HMG14). In lipopolysaccharide-stimulated primary macrophages, acts downstream of the Toll-like receptor TLR4 to limit the production of pro-inflammatory cytokines. Functions probably by inducing transcription of the MAP kinase phosphatase DUSP1 and the anti-inflammatory cytokine interleukin 10 (IL10), via CREB1 and ATF1 transcription factors. Plays a role in neuronal cell death by mediating the downstream effects of excitotoxic injury. Phosphorylates TRIM7 at 'Ser-106' in response to growth factor signaling via the MEK/ERK pathway, thereby stimulating its ubiquitin ligase activity. In Mus musculus (Mouse), this protein is Ribosomal protein S6 kinase alpha-5 (Rps6ka5).